Here is a 258-residue protein sequence, read N- to C-terminus: Thiazole synthase (258 aa).

Lysine 100 acts as the Schiff-base intermediate with DXP in catalysis. 1-deoxy-D-xylulose 5-phosphate is bound by residues glycine 161, alanine 187–glycine 188, and asparagine 209–threonine 210.

Belongs to the ThiG family. As to quaternary structure, homotetramer. Forms heterodimers with either ThiH or ThiS.

It localises to the cytoplasm. The catalysed reaction is [ThiS sulfur-carrier protein]-C-terminal-Gly-aminoethanethioate + 2-iminoacetate + 1-deoxy-D-xylulose 5-phosphate = [ThiS sulfur-carrier protein]-C-terminal Gly-Gly + 2-[(2R,5Z)-2-carboxy-4-methylthiazol-5(2H)-ylidene]ethyl phosphate + 2 H2O + H(+). The protein operates within cofactor biosynthesis; thiamine diphosphate biosynthesis. Its function is as follows. Catalyzes the rearrangement of 1-deoxy-D-xylulose 5-phosphate (DXP) to produce the thiazole phosphate moiety of thiamine. Sulfur is provided by the thiocarboxylate moiety of the carrier protein ThiS. In vitro, sulfur can be provided by H(2)S. In Campylobacter jejuni subsp. jejuni serotype O:2 (strain ATCC 700819 / NCTC 11168), this protein is Thiazole synthase.